A 317-amino-acid chain; its full sequence is Carbonic anhydrase 5B, mitochondrial (317 aa).

A mitochondrion-targeting transit peptide spans 1–33 (MAVMNHLRVILQVSSSTLPWRRCWVPRLVPRRS). Residues 37–296 (YTCTYRTRNR…LMNRTVRSSF (260 aa)) form the Alpha-carbonic anhydrase domain. Zn(2+)-binding residues include H130, H132, and H155. Residue 235-236 (TT) participates in substrate binding.

The protein belongs to the alpha-carbonic anhydrase family. The cofactor is Zn(2+). As to expression, expressed in the heart, liver, lung, kidney, testis, and skeletal muscle (at protein level).

The protein localises to the mitochondrion. The catalysed reaction is hydrogencarbonate + H(+) = CO2 + H2O. Mitochondrial carbonic anhydrase that catalyzes the reversible conversion of carbon dioxide to bicarbonate/HCO3. The polypeptide is Carbonic anhydrase 5B, mitochondrial (Ca5b) (Mus musculus (Mouse)).